We begin with the raw amino-acid sequence, 467 residues long: Chromosomal replication initiator protein DnaA (467 aa).

The domain I, interacts with DnaA modulators stretch occupies residues 1–90 (MSLSLWQQCL…KPVTQTPQAA (90 aa)). The interval 91–130 (VTSNVAAPAQVAQTQPQRAAPSMRSGWDNVPAPAEPTYRS) is domain II. The domain III, AAA+ region stretch occupies residues 131–347 (NVNVKHTFDN…GALNRVIANA (217 aa)). Residues Gly-175, Gly-177, Lys-178, and Thr-179 each contribute to the ATP site. The segment at 348-467 (NFTGRAITID…FSNLIRTLSS (120 aa)) is domain IV, binds dsDNA.

This sequence belongs to the DnaA family. Oligomerizes as a right-handed, spiral filament on DNA at oriC.

It localises to the cytoplasm. Its function is as follows. Plays an essential role in the initiation and regulation of chromosomal replication. ATP-DnaA binds to the origin of replication (oriC) to initiate formation of the DNA replication initiation complex once per cell cycle. Binds the DnaA box (a 9 base pair repeat at the origin) and separates the double-stranded (ds)DNA. Forms a right-handed helical filament on oriC DNA; dsDNA binds to the exterior of the filament while single-stranded (ss)DNA is stabiized in the filament's interior. The ATP-DnaA-oriC complex binds and stabilizes one strand of the AT-rich DNA unwinding element (DUE), permitting loading of DNA polymerase. After initiation quickly degrades to an ADP-DnaA complex that is not apt for DNA replication. Binds acidic phospholipids. The protein is Chromosomal replication initiator protein DnaA of Escherichia coli (strain ATCC 8739 / DSM 1576 / NBRC 3972 / NCIMB 8545 / WDCM 00012 / Crooks).